The following is a 272-amino-acid chain: Shikimate dehydrogenase (NADP(+)) (272 aa).

Shikimate is bound by residues 14-16 (SKS) and Thr-61. The Proton acceptor role is filled by Lys-65. Shikimate contacts are provided by Asn-86 and Asp-102. NADP(+) contacts are provided by residues 126–130 (GAGGA), 150–155 (NRTASK), and Met-214. Tyr-216 contacts shikimate. Gly-239 lines the NADP(+) pocket.

This sequence belongs to the shikimate dehydrogenase family. In terms of assembly, homodimer.

It catalyses the reaction shikimate + NADP(+) = 3-dehydroshikimate + NADPH + H(+). Its pathway is metabolic intermediate biosynthesis; chorismate biosynthesis; chorismate from D-erythrose 4-phosphate and phosphoenolpyruvate: step 4/7. In terms of biological role, involved in the biosynthesis of the chorismate, which leads to the biosynthesis of aromatic amino acids. Catalyzes the reversible NADPH linked reduction of 3-dehydroshikimate (DHSA) to yield shikimate (SA). The chain is Shikimate dehydrogenase (NADP(+)) from Pseudoalteromonas atlantica (strain T6c / ATCC BAA-1087).